The primary structure comprises 311 residues: Tricarboxylate transport protein, mitochondrial (311 aa).

Positions M1–A13 are cleaved as a propeptide — removed in mature form. The span at M1–P15 shows a compositional bias: low complexity. The segment at M1 to L22 is disordered. 3 Solcar repeats span residues T23–H111, T122–W208, and M218–L303. 3 consecutive transmembrane segments (helical) span residues I29 to T46, G86 to F105, and L129 to M143. Phosphoserine is present on S156. The next 3 membrane-spanning stretches (helical) occupy residues G183–M202, G224–L241, and G278–Y297.

This sequence belongs to the mitochondrial carrier (TC 2.A.29) family. Possesses a short cleavable presequence, which, however, is found to be dispensable both for targeting to mitochondria and insertion into the inner membrane. However, the presequence is required to keep SLC25A1 in a soluble state and thus in an import-competent state. Mature SLC25A1 lacking the presequence is prone to aggregation.

The protein localises to the mitochondrion inner membrane. It localises to the mitochondrion membrane. It catalyses the reaction (S)-malate(in) + citrate(out) = (S)-malate(out) + citrate(in). It carries out the reaction D-threo-isocitrate(in) + citrate(out) = D-threo-isocitrate(out) + citrate(in). The enzyme catalyses citrate(out) + succinate(in) = citrate(in) + succinate(out). The catalysed reaction is phosphoenolpyruvate(in) + citrate(out) = phosphoenolpyruvate(out) + citrate(in). It catalyses the reaction cis-aconitate(in) + citrate(out) = cis-aconitate(out) + citrate(in). It carries out the reaction trans-aconitate(in) + citrate(out) = trans-aconitate(out) + citrate(in). The enzyme catalyses maleate(in) + citrate(out) = maleate(out) + citrate(in). In terms of biological role, mitochondrial electroneutral antiporter that exports citrate from the mitochondria into the cytosol in exchange for malate. Also able to mediate the exchange of citrate for isocitrate, phosphoenolpyruvate, cis-aconitate and to a lesser extent trans-aconitate, maleate and succinate. In the cytoplasm, citrate plays important roles in fatty acid and sterol synthesis, regulation of glycolysis, protein acetylation, and other physiopathological processes. The polypeptide is Tricarboxylate transport protein, mitochondrial (SLC25A1) (Bos taurus (Bovine)).